The primary structure comprises 42 residues: Large ribosomal subunit protein bL36 (42 aa).

This sequence belongs to the bacterial ribosomal protein bL36 family.

The chain is Large ribosomal subunit protein bL36 from Anaplasma marginale (strain St. Maries).